A 243-amino-acid chain; its full sequence is Type III pantothenate kinase (243 aa).

6–13 (DGGNTFIK) contacts ATP. Residues Tyr-87 and 94–97 (GKDR) each bind substrate. The Proton acceptor role is filled by Asp-96. Asp-117 contacts K(+). Thr-120 is an ATP binding site. Thr-172 is a binding site for substrate.

This sequence belongs to the type III pantothenate kinase family. As to quaternary structure, homodimer. NH4(+) serves as cofactor. K(+) is required as a cofactor.

The protein localises to the cytoplasm. The enzyme catalyses (R)-pantothenate + ATP = (R)-4'-phosphopantothenate + ADP + H(+). The protein operates within cofactor biosynthesis; coenzyme A biosynthesis; CoA from (R)-pantothenate: step 1/5. Catalyzes the phosphorylation of pantothenate (Pan), the first step in CoA biosynthesis. In Christiangramia forsetii (strain DSM 17595 / CGMCC 1.15422 / KT0803) (Gramella forsetii), this protein is Type III pantothenate kinase.